We begin with the raw amino-acid sequence, 241 residues long: Triosephosphate isomerase (241 aa).

9-11 (NWK) serves as a coordination point for substrate. His-96 functions as the Electrophile in the catalytic mechanism. Residue Glu-165 is the Proton acceptor of the active site. Residues Gly-171, Ser-204, and 225 to 226 (GG) each bind substrate.

The protein belongs to the triosephosphate isomerase family. Homodimer.

The protein resides in the cytoplasm. The catalysed reaction is D-glyceraldehyde 3-phosphate = dihydroxyacetone phosphate. It functions in the pathway carbohydrate biosynthesis; gluconeogenesis. The protein operates within carbohydrate degradation; glycolysis; D-glyceraldehyde 3-phosphate from glycerone phosphate: step 1/1. Its function is as follows. Involved in the gluconeogenesis. Catalyzes stereospecifically the conversion of dihydroxyacetone phosphate (DHAP) to D-glyceraldehyde-3-phosphate (G3P). This is Triosephosphate isomerase from Prochlorococcus marinus (strain MIT 9312).